We begin with the raw amino-acid sequence, 276 residues long: Large ribosomal subunit protein uL2cy (276 aa).

Disordered regions lie at residues 1–25 and 225–276; these read MAIH…VKSN and MNPV…RRSK. Residues 7–25 show a composition bias toward polar residues; it reads KTSTPSTRNGTVDSQVKSN.

Belongs to the universal ribosomal protein uL2 family. As to quaternary structure, part of the 50S ribosomal subunit.

The protein localises to the plastid. It localises to the chloroplast. This Coffea arabica (Arabian coffee) protein is Large ribosomal subunit protein uL2cy (rpl2-B).